The following is a 102-amino-acid chain: snRNA-activating protein complex subunit 5 (102 aa).

Residues 73–82 (QTTLKLSTRS) are compositionally biased toward polar residues. Residues 73 to 102 (QTTLKLSTRSPMEEEEEEEEEEEEEEESDS) form a disordered region. Residues 85 to 102 (EEEEEEEEEEEEEEESDS) are compositionally biased toward acidic residues.

In terms of assembly, part of the SNAPc complex composed of 5 subunits: SNAPC1, SNAPC2, SNAPC3, SNAPC4 and SNAPC5. SNAPC5 interacts with SNAPC4.

Its subcellular location is the nucleus. Its function is as follows. Part of the SNAPc complex required for the transcription of both RNA polymerase II and III small-nuclear RNA genes. Binds to the proximal sequence element (PSE), a non-TATA-box basal promoter element common to these 2 types of genes. Recruits TBP and BRF2 to the U6 snRNA TATA box. The chain is snRNA-activating protein complex subunit 5 from Mus musculus (Mouse).